Consider the following 151-residue polypeptide: Large ribosomal subunit protein uL15 (151 aa).

The disordered stretch occupies residues M1–L60.

Belongs to the universal ribosomal protein uL15 family. Part of the 50S ribosomal subunit.

Its function is as follows. Binds to the 23S rRNA. This is Large ribosomal subunit protein uL15 from Streptomyces avermitilis (strain ATCC 31267 / DSM 46492 / JCM 5070 / NBRC 14893 / NCIMB 12804 / NRRL 8165 / MA-4680).